The chain runs to 112 residues: Large ribosomal subunit protein mL53 (112 aa).

Belongs to the mitochondrion-specific ribosomal protein mL53 family. Component of the mitochondrial large ribosomal subunit (mt-LSU). Mature mammalian 55S mitochondrial ribosomes consist of a small (28S) and a large (39S) subunit. The 28S small subunit contains a 12S ribosomal RNA (12S mt-rRNA) and 30 different proteins. The 39S large subunit contains a 16S rRNA (16S mt-rRNA), a copy of mitochondrial valine transfer RNA (mt-tRNA(Val)), which plays an integral structural role, and 52 different proteins. mL53 is located at the L7/L12 stalk.

The protein localises to the mitochondrion. The protein is Large ribosomal subunit protein mL53 (MRPL53) of Homo sapiens (Human).